We begin with the raw amino-acid sequence, 756 residues long: 5-methyltetrahydropteroyltriglutamate--homocysteine methyltransferase (756 aa).

5-methyltetrahydropteroyltri-L-glutamate contacts are provided by residues 15–18 and Lys-111; that span reads REWK. A disordered region spans residues 392–411; that stretch reads GAATSHNLENKKRPQSFNER. A compositionally biased stretch (basic and acidic residues) spans 399–411; that stretch reads LENKKRPQSFNER. L-homocysteine contacts are provided by residues 429 to 431 and Glu-482; that span reads IGS. Residues 429-431 and Glu-482 each bind L-methionine; that span reads IGS. 5-methyltetrahydropteroyltri-L-glutamate contacts are provided by residues 513–514 and Trp-559; that span reads RC. Asp-597 contacts L-homocysteine. Asp-597 contacts L-methionine. Glu-603 is a 5-methyltetrahydropteroyltri-L-glutamate binding site. The Zn(2+) site is built by His-639, Cys-641, and Glu-663. His-692 functions as the Proton donor in the catalytic mechanism. Cys-724 is a binding site for Zn(2+).

It belongs to the vitamin-B12 independent methionine synthase family. Requires Zn(2+) as cofactor.

The enzyme catalyses 5-methyltetrahydropteroyltri-L-glutamate + L-homocysteine = tetrahydropteroyltri-L-glutamate + L-methionine. It functions in the pathway amino-acid biosynthesis; L-methionine biosynthesis via de novo pathway; L-methionine from L-homocysteine (MetE route): step 1/1. Catalyzes the transfer of a methyl group from 5-methyltetrahydrofolate to homocysteine resulting in methionine formation. This is 5-methyltetrahydropteroyltriglutamate--homocysteine methyltransferase from Halalkalibacterium halodurans (strain ATCC BAA-125 / DSM 18197 / FERM 7344 / JCM 9153 / C-125) (Bacillus halodurans).